Here is a 519-residue protein sequence, read N- to C-terminus: Flavonoid 8-hydroxylase 2, chloroplastic (519 aa).

The N-terminal 46 residues, 1-46 (MEVLQASSLSFQLLRRHSRNNLINKFRNPSLPRIHMPRQNIDLKTF), are a transit peptide targeting the chloroplast. A Rieske domain is found at 77-188 (WYPVASVCDL…SCVRNGIVWF (112 aa)). Residues cysteine 119, histidine 121, cysteine 139, and histidine 142 each coordinate [2Fe-2S] cluster. Fe cation is bound by residues histidine 241 and histidine 246. The short motif at 447–450 (CSSC) is the Redox-active motif element. The next 2 helical transmembrane spans lie at 462–478 (IGLQ…AAAV) and 485–501 (YSMV…SKWL).

[2Fe-2S] cluster is required as a cofactor. As to expression, glandular trichome-specific expression in leaves.

The protein resides in the plastid. The protein localises to the chloroplast membrane. Its subcellular location is the cytoplasm. It carries out the reaction salvigenin + 2 reduced [2Fe-2S]-[ferredoxin] + O2 + 2 H(+) = 8-hydroxysalvigenin + 2 oxidized [2Fe-2S]-[ferredoxin] + H2O. Its pathway is flavonoid metabolism. Rieske-type, PAO-family oxygenase involved in the biosynthesis of polymethoxylated flavonoids natural products such as nevadensin and salvigenin, aroma compounds which contribute to the flavor of sweet basil, and exhibit pharmacological activities such as anti-allergic, anti-oxidant, antibacterial, anti-proliferative, and anti-inflammatory effects. Catalyzes the hydroxylation of salvigenin to produce 8-hydroxysalvigenin (8-OH-SALV). In Ocimum basilicum (Sweet basil), this protein is Flavonoid 8-hydroxylase 2, chloroplastic.